The sequence spans 201 residues: Probable GTP-binding protein EngB (201 aa).

One can recognise an EngB-type G domain in the interval S22–Y195. GTP contacts are provided by residues G30–S37, G57–T61, D75–G78, T142–D145, and Y174–S176. Positions 37 and 59 each coordinate Mg(2+).

This sequence belongs to the TRAFAC class TrmE-Era-EngA-EngB-Septin-like GTPase superfamily. EngB GTPase family. Mg(2+) is required as a cofactor.

Its function is as follows. Necessary for normal cell division and for the maintenance of normal septation. The protein is Probable GTP-binding protein EngB of Finegoldia magna (strain ATCC 29328 / DSM 20472 / WAL 2508) (Peptostreptococcus magnus).